The sequence spans 122 residues: MIQMQTILDVADNSGAKKLFCIKVLGGSKRKYAGIGDIIVASVKEAIPNSKVKKGDVVKAVVVRTAKEIGRPDGSYIRFDGNSGVVINNQKEPVGTRIFGPVARELRAKKFMKIISLAPEVL.

The protein belongs to the universal ribosomal protein uL14 family. As to quaternary structure, part of the 50S ribosomal subunit. Forms a cluster with proteins L3 and L19. In the 70S ribosome, L14 and L19 interact and together make contacts with the 16S rRNA in bridges B5 and B8.

Binds to 23S rRNA. Forms part of two intersubunit bridges in the 70S ribosome. The protein is Large ribosomal subunit protein uL14 of Geotalea daltonii (strain DSM 22248 / JCM 15807 / FRC-32) (Geobacter daltonii).